Consider the following 302-residue polypeptide: Phosphoribosylaminoimidazole-succinocarboxamide synthase (302 aa).

Belongs to the SAICAR synthetase family.

The enzyme catalyses 5-amino-1-(5-phospho-D-ribosyl)imidazole-4-carboxylate + L-aspartate + ATP = (2S)-2-[5-amino-1-(5-phospho-beta-D-ribosyl)imidazole-4-carboxamido]succinate + ADP + phosphate + 2 H(+). It functions in the pathway purine metabolism; IMP biosynthesis via de novo pathway; 5-amino-1-(5-phospho-D-ribosyl)imidazole-4-carboxamide from 5-amino-1-(5-phospho-D-ribosyl)imidazole-4-carboxylate: step 1/2. The chain is Phosphoribosylaminoimidazole-succinocarboxamide synthase from Cupriavidus pinatubonensis (strain JMP 134 / LMG 1197) (Cupriavidus necator (strain JMP 134)).